The following is an 885-amino-acid chain: Cadherin-1 (885 aa).

Positions 1-26 (MGPRYGGAPALLLPLLLLLQVSSGLC) are cleaved as a signal peptide. Positions 27–156 (QEPEPCRPGF…SQHGLRRQKR (130 aa)) are excised as a propeptide. A compositionally biased stretch (basic residues) spans 121-131 (KAATHHHHHHH). The interval 121–141 (KAATHHHHHHHDAPSKTQTEV) is disordered. Topologically, residues 157 to 712 (DWVIPPISCP…YAEAGLQVPA (556 aa)) are extracellular. Cadherin domains follow at residues 158–264 (WVIP…KPEF), 265–377 (TQAV…PPIF), 378–488 (NPTT…APIF), 489–597 (IPCP…GPIP), and 607–688 (KNPQ…VFVC). Residue Asp259 participates in Ca(2+) binding. O-linked (Man...) serine glycosylation is present at Ser282. The O-linked (Man...) threonine glycan is linked to Thr287. Residue Asp290 coordinates Ca(2+). Residues Thr360, Thr472, Thr474, and Thr511 are each glycosylated (O-linked (Man...) threonine). N-linked (GlcNAc...) asparagine glycosylation is present at Asn560. Thr578, Thr580, and Thr582 each carry an O-linked (Man...) threonine glycan. Asn639 carries N-linked (GlcNAc...) asparagine glycosylation. Residues 713–733 (ILGILGGILALLILILLLLLF) form a helical membrane-spanning segment. Residues 734–885 (VRRRRVVKEP…ADMYGGGEDD (152 aa)) lie on the Cytoplasmic side of the membrane. Residues 750–770 (DTRDNVYYYDEEGGGEEDQDF) are disordered. Residues Tyr756, Tyr757, and Tyr758 each carry the phosphotyrosine; by SRC modification. Over residues 758 to 770 (YDEEGGGEEDQDF) the composition is skewed to acidic residues. Residues 761–772 (EGGGEEDQDFDL) are required for binding CTNND1 and PSEN1. A phosphoserine mark is found at Ser773, Ser796, Ser841, Ser843, and Ser849. Residues 792–811 (PTLLSVPQYRPRPANPDEIG) are disordered. Residues 814–885 (IDENLKAADT…ADMYGGGEDD (72 aa)) are required for binding alpha, beta and gamma catenins.

In terms of assembly, homodimer; disulfide-linked. Component of an E-cadherin/ catenin adhesion complex composed of at least E-cadherin/CDH1, beta-catenin/CTNNB1 or gamma-catenin/JUP, and potentially alpha-catenin/CTNNA1; the complex is located to adherens junctions. Found in a complex composed of CDH1, RAP1A and PKP3; PKP3 acts as a scaffold protein within the complex, the complex is required for CDH1 localization to mature desmosome cell junctions. Interacts with the TRPV4 and CTNNB1 complex. Interacts with CTNND1. The stable association of CTNNA1 is controversial as CTNNA1 was shown not to bind to F-actin when assembled in the complex. Alternatively, the CTNNA1-containing complex may be linked to F-actin by other proteins such as LIMA1. Interaction with PSEN1, cleaves CDH1 resulting in the disassociation of cadherin-based adherens junctions (CAJs). Interacts with AJAP1 and DLGAP5. Interacts with TBC1D2. Interacts with LIMA1. Interacts with CAV1. Interacts with PIP5K1C. Interacts with RAB8B. Interacts with DDR1; this stabilizes CDH1 at the cell surface and inhibits its internalization. Interacts with RAPGEF2. Interacts with KLRG1. Forms a ternary complex composed of ADAM10, CADH1 and EPHA4; within the complex, CADH1 is cleaved by ADAM10 which disrupts adherens junctions. Interacts with SPEF1. Interacts with CTNNB1 and PKP2. Interacts with AMOTL2; the interaction may facilitate binding of radial actin fibers to cell junction complexes. Interacts with DSG3; the interaction is required for CDH1 localization to developing adherens junctions. During apoptosis or with calcium influx, cleaved by a membrane-bound metalloproteinase (ADAM10), PS1/gamma-secretase and caspase-3. Processing by the metalloproteinase, induced by calcium influx, causes disruption of cell-cell adhesion and the subsequent release of beta-catenin into the cytoplasm. The residual membrane-tethered cleavage product is rapidly degraded via an intracellular proteolytic pathway. Cleavage by caspase-3 releases the cytoplasmic tail resulting in disintegration of the actin microfilament system. The gamma-secretase-mediated cleavage promotes disassembly of adherens junctions. During development of the cochlear organ of Corti, cleavage by ADAM10 at adherens junctions promotes pillar cell separation. In terms of processing, N-glycosylation at Asn-639 is essential for expression, folding and trafficking. Addition of bisecting N-acetylglucosamine by MGAT3 modulates its cell membrane location. Post-translationally, ubiquitinated by a SCF complex containing SKP2, which requires prior phosphorylation by CK1/CSNK1A1. Ubiquitinated by CBLL1/HAKAI, requires prior phosphorylation at Tyr-757. O-glycosylated. O-manosylated by TMTC1, TMTC2, TMTC3 or TMTC4. Thr-287 and Thr-511 are O-mannosylated by TMTC2 or TMTC4 but not TMTC1 or TMTC3.

It is found in the cell junction. Its subcellular location is the adherens junction. The protein localises to the cell membrane. The protein resides in the endosome. It localises to the golgi apparatus. It is found in the trans-Golgi network. Its subcellular location is the cytoplasm. The protein localises to the desmosome. Functionally, cadherins are calcium-dependent cell adhesion proteins. They preferentially interact with themselves in a homophilic manner in connecting cells; cadherins may thus contribute to the sorting of heterogeneous cell types. CDH1 is involved in mechanisms regulating cell-cell adhesions, mobility and proliferation of epithelial cells. Promotes organization of radial actin fiber structure and cellular response to contractile forces, via its interaction with AMOTL2 which facilitates anchoring of radial actin fibers to CDH1 junction complexes at the cell membrane. Plays a role in the early stages of desmosome cell-cell junction formation via facilitating the recruitment of DSG2 and DSP to desmosome plaques. Has a potent invasive suppressor role. It is a ligand for integrin alpha-E/beta-7. Its function is as follows. E-Cad/CTF2 promotes non-amyloidogenic degradation of Abeta precursors. Has a strong inhibitory effect on APP C99 and C83 production. The chain is Cadherin-1 (CDH1) from Canis lupus familiaris (Dog).